The primary structure comprises 127 residues: Large ribosomal subunit protein bL20 (127 aa).

This sequence belongs to the bacterial ribosomal protein bL20 family.

Binds directly to 23S ribosomal RNA and is necessary for the in vitro assembly process of the 50S ribosomal subunit. It is not involved in the protein synthesizing functions of that subunit. In Streptomyces coelicolor (strain ATCC BAA-471 / A3(2) / M145), this protein is Large ribosomal subunit protein bL20 (rplT).